The primary structure comprises 163 residues: Nucleotide-binding protein GK0742 (163 aa).

It belongs to the YajQ family.

Its function is as follows. Nucleotide-binding protein. The protein is Nucleotide-binding protein GK0742 of Geobacillus kaustophilus (strain HTA426).